Consider the following 109-residue polypeptide: Ribonuclease P protein component 2 (109 aa).

This sequence belongs to the eukaryotic/archaeal RNase P protein component 2 family. In terms of assembly, consists of a catalytic RNA component and at least 4-5 protein subunits.

The protein resides in the cytoplasm. The enzyme catalyses Endonucleolytic cleavage of RNA, removing 5'-extranucleotides from tRNA precursor.. In terms of biological role, part of ribonuclease P, a protein complex that generates mature tRNA molecules by cleaving their 5'-ends. The polypeptide is Ribonuclease P protein component 2 (Archaeoglobus fulgidus (strain ATCC 49558 / DSM 4304 / JCM 9628 / NBRC 100126 / VC-16)).